We begin with the raw amino-acid sequence, 941 residues long: Translation initiation factor IF-2 (941 aa).

Basic and acidic residues predominate over residues Asp170 to Lys209. Disordered regions lie at residues Asp170–Ala228 and Arg252–Gln351. The segment covering Ala256–Glu269 has biased composition (low complexity). Positions Thr271–Ser297 are enriched in basic and acidic residues. Positions Lys299–Gln308 are enriched in polar residues. The tr-type G domain maps to Pro441–Lys610. Residues Gly450 to Thr457 are G1. Residue Gly450–Thr457 coordinates GTP. A G2 region spans residues Gly475 to His479. A G3 region spans residues Asp496–Gly499. Residues Asp496 to His500 and Asn550 to Asp553 contribute to the GTP site. Residues Asn550–Asp553 are G4. The interval Ser586–Lys588 is G5.

It belongs to the TRAFAC class translation factor GTPase superfamily. Classic translation factor GTPase family. IF-2 subfamily.

It is found in the cytoplasm. In terms of biological role, one of the essential components for the initiation of protein synthesis. Protects formylmethionyl-tRNA from spontaneous hydrolysis and promotes its binding to the 30S ribosomal subunits. Also involved in the hydrolysis of GTP during the formation of the 70S ribosomal complex. In Herminiimonas arsenicoxydans, this protein is Translation initiation factor IF-2.